The following is a 106-amino-acid chain: Evasin P1168 (106 aa).

Residues 1 to 24 (MEVKISTFLQIAVLIVLGIHLIAA) form the signal peptide. 3 cysteine pairs are disulfide-bonded: cysteine 45/cysteine 67, cysteine 49/cysteine 69, and cysteine 60/cysteine 80. 3 N-linked (GlcNAc...) asparagine glycosylation sites follow: asparagine 48, asparagine 54, and asparagine 64.

Its subcellular location is the secreted. Functionally, salivary chemokine-binding protein which binds to host chemokines CXCL1, CXCL2 and CXCL8. The polypeptide is Evasin P1168 (Ixodes ricinus (Common tick)).